The following is a 107-amino-acid chain: SOSS complex subunit C (107 aa).

The protein belongs to the SOSS-C family. As to quaternary structure, belongs to the multiprotein complex Integrator. Component of the SOSS complex, composed of soss-b (soss-b1/nabp2 or soss-b2/nabp1), soss-a/ints3 and soss-c/inip.

The protein resides in the nucleus. Component of the SOSS complex, a multiprotein complex that functions downstream of the MRN complex to promote DNA repair and G2/M checkpoint. The SOSS complex associates with single-stranded DNA at DNA lesions and influences diverse endpoints in the cellular DNA damage response including cell-cycle checkpoint activation, recombinational repair and maintenance of genomic stability. Required for efficient homologous recombination-dependent repair of double-strand breaks (DSBs). This chain is SOSS complex subunit C (inip), found in Salmo salar (Atlantic salmon).